The sequence spans 190 residues: Peptidyl-tRNA hydrolase (190 aa).

TRNA is bound at residue tyrosine 17. Histidine 22 (proton acceptor) is an active-site residue. Tyrosine 67 and asparagine 69 together coordinate tRNA.

Belongs to the PTH family. As to quaternary structure, monomer.

The protein localises to the cytoplasm. The catalysed reaction is an N-acyl-L-alpha-aminoacyl-tRNA + H2O = an N-acyl-L-amino acid + a tRNA + H(+). Hydrolyzes ribosome-free peptidyl-tRNAs (with 1 or more amino acids incorporated), which drop off the ribosome during protein synthesis, or as a result of ribosome stalling. In terms of biological role, catalyzes the release of premature peptidyl moieties from peptidyl-tRNA molecules trapped in stalled 50S ribosomal subunits, and thus maintains levels of free tRNAs and 50S ribosomes. This Moorella thermoacetica (strain ATCC 39073 / JCM 9320) protein is Peptidyl-tRNA hydrolase.